A 91-amino-acid polypeptide reads, in one-letter code: Essential MCU regulator, mitochondrial (91 aa).

The helical transmembrane segment at 45-65 (VIPFGLLGVVLTVIPGLLIGA) threads the bilayer.

This sequence belongs to the SMDT1/EMRE family.

Its subcellular location is the mitochondrion inner membrane. Essential regulatory subunit of the mitochondrial calcium uniporter (mcu) channel, a protein that mediates calcium uptake into mitochondria. In Aedes aegypti (Yellowfever mosquito), this protein is Essential MCU regulator, mitochondrial.